Here is a 690-residue protein sequence, read N- to C-terminus: Protein arginine N-methyltransferase 7 (690 aa).

2 SAM-dependent MTase PRMT-type domains span residues glutamate 14–tryptophan 357 and alanine 366–proline 690.

The protein belongs to the class I-like SAM-binding methyltransferase superfamily. Protein arginine N-methyltransferase family. PRMT7 subfamily.

In terms of biological role, essential arginine methyltransferase that can both catalyze the formation of omega-N monomethylarginine (MMA) and symmetrical dimethylarginine (sDMA). Specifically mediates the symmetrical dimethylation of arginine residues in the small nuclear ribonucleoproteins SmD1 and SmD3. The polypeptide is Protein arginine N-methyltransferase 7 (Art7) (Drosophila ananassae (Fruit fly)).